Consider the following 214-residue polypeptide: ATP-dependent Clp protease proteolytic subunit 2 (214 aa).

Ser-110 functions as the Nucleophile in the catalytic mechanism. The active site involves His-135.

This sequence belongs to the peptidase S14 family. As to quaternary structure, fourteen ClpP subunits assemble into 2 heptameric rings which stack back to back to give a disk-like structure with a central cavity, resembling the structure of eukaryotic proteasomes.

The protein resides in the cytoplasm. The catalysed reaction is Hydrolysis of proteins to small peptides in the presence of ATP and magnesium. alpha-casein is the usual test substrate. In the absence of ATP, only oligopeptides shorter than five residues are hydrolyzed (such as succinyl-Leu-Tyr-|-NHMec, and Leu-Tyr-Leu-|-Tyr-Trp, in which cleavage of the -Tyr-|-Leu- and -Tyr-|-Trp bonds also occurs).. Cleaves peptides in various proteins in a process that requires ATP hydrolysis. Has a chymotrypsin-like activity. Plays a major role in the degradation of misfolded proteins. The chain is ATP-dependent Clp protease proteolytic subunit 2 from Mycobacterium bovis (strain ATCC BAA-935 / AF2122/97).